Here is a 461-residue protein sequence, read N- to C-terminus: L-seryl-tRNA(Sec) selenium transferase (461 aa).

K294 is modified (N6-(pyridoxal phosphate)lysine).

This sequence belongs to the SelA family. Pyridoxal 5'-phosphate serves as cofactor.

It localises to the cytoplasm. The catalysed reaction is L-seryl-tRNA(Sec) + selenophosphate + H(+) = L-selenocysteinyl-tRNA(Sec) + phosphate. It participates in aminoacyl-tRNA biosynthesis; selenocysteinyl-tRNA(Sec) biosynthesis; selenocysteinyl-tRNA(Sec) from L-seryl-tRNA(Sec) (bacterial route): step 1/1. Its function is as follows. Converts seryl-tRNA(Sec) to selenocysteinyl-tRNA(Sec) required for selenoprotein biosynthesis. In Haemophilus influenzae (strain ATCC 51907 / DSM 11121 / KW20 / Rd), this protein is L-seryl-tRNA(Sec) selenium transferase.